Reading from the N-terminus, the 271-residue chain is Nus factor SuhB (271 aa).

The Mg(2+) site is built by Glu-67, Asp-86, and Leu-88. A substrate-binding site is contributed by Glu-67. Substrate is bound by residues 88–91, Arg-187, and Asp-216; that span reads LDGT.

It belongs to the inositol monophosphatase superfamily. As to quaternary structure, homodimer. The rRNA transcription and antitermination complex (rrnTAC) consists of RNA polymerase (RNAP), NusA, NusB, NusE (rpsJ), NusG, SubB, ribosomal protein S4, DNA and precursor rRNA; S4 is more flexible than other subunits. Interacts with the ribosome and with RNA polymerase. Mg(2+) is required as a cofactor.

The protein localises to the cytoplasm. It catalyses the reaction a myo-inositol phosphate + H2O = myo-inositol + phosphate. Functionally, part of the processive rRNA transcription and antitermination complex (rrnTAC). The complex forms an RNA-chaperone ring around the RNA exit tunnel of RNA polymerase (RNAP). It supports rapid transcription and antitermination of rRNA operons, cotranscriptional rRNA folding, and annealing of distal rRNA regions to allow correct ribosome biogenesis. This subunit may play a central role in organizing the structure. A ribosome-associated protein, deletion of which alters the expression of 494 genes, suggesting a role in global gene regulation. Involved in control of pathogenesis-related genes. Required for the activation of virulence factors associated with acute infections (type 3 secretion system, T3SS) while suppressing virulence factors associated with chronic infections (biofilm formation and type 6 secretion system, T6SS). It probably acts at a post-transcriptional level. The chain is Nus factor SuhB from Pseudomonas aeruginosa (strain ATCC 15692 / DSM 22644 / CIP 104116 / JCM 14847 / LMG 12228 / 1C / PRS 101 / PAO1).